Here is a 448-residue protein sequence, read N- to C-terminus: 3-phosphoshikimate 1-carboxyvinyltransferase (448 aa).

3 residues coordinate 3-phosphoshikimate: Lys38, Ser39, and Arg43. Residue Lys38 participates in phosphoenolpyruvate binding. Residues Gly111 and Arg140 each coordinate phosphoenolpyruvate. 3-phosphoshikimate is bound by residues Ser185, Gln187, Asp335, and Lys362. Gln187 serves as a coordination point for phosphoenolpyruvate. Asp335 serves as the catalytic Proton acceptor. Arg366 and Arg408 together coordinate phosphoenolpyruvate.

Belongs to the EPSP synthase family. As to quaternary structure, monomer.

It localises to the cytoplasm. It carries out the reaction 3-phosphoshikimate + phosphoenolpyruvate = 5-O-(1-carboxyvinyl)-3-phosphoshikimate + phosphate. It participates in metabolic intermediate biosynthesis; chorismate biosynthesis; chorismate from D-erythrose 4-phosphate and phosphoenolpyruvate: step 6/7. Functionally, catalyzes the transfer of the enolpyruvyl moiety of phosphoenolpyruvate (PEP) to the 5-hydroxyl of shikimate-3-phosphate (S3P) to produce enolpyruvyl shikimate-3-phosphate and inorganic phosphate. The protein is 3-phosphoshikimate 1-carboxyvinyltransferase of Gloeothece citriformis (strain PCC 7424) (Cyanothece sp. (strain PCC 7424)).